A 325-amino-acid polypeptide reads, in one-letter code: Peroxidase RIP1 (325 aa).

The signal sequence occupies residues 1–21 (MASSSPCQIFLVFVMVTLVTS). Intrachain disulfides connect C38–C118, C71–C76, C125–C321, and C206–C231. H69 (proton acceptor) is an active-site residue. Positions 70, 73, 75, 77, and 79 each coordinate Ca(2+). Residue N87 is glycosylated (N-linked (GlcNAc...) asparagine). P169 contacts substrate. A glycan (N-linked (GlcNAc...) asparagine) is linked at N174. H199 lines the heme b pocket. A Ca(2+)-binding site is contributed by T200. N-linked (GlcNAc...) asparagine glycosylation occurs at N215. 3 residues coordinate Ca(2+): D244, T246, and E251.

This sequence belongs to the peroxidase family. Classical plant (class III) peroxidase subfamily. It depends on heme b as a cofactor. Requires Ca(2+) as cofactor. As to expression, expressed in the differentiating root epidermis following inoculation with the bacterial symbiont Sinorhizobium meliloti.

It localises to the secreted. The enzyme catalyses 2 a phenolic donor + H2O2 = 2 a phenolic radical donor + 2 H2O. Functionally, removal of H(2)O(2), oxidation of toxic reductants, biosynthesis and degradation of lignin, suberization, auxin catabolism, response to environmental stresses such as wounding, pathogen attack and oxidative stress. These functions might be dependent on each isozyme/isoform in each plant tissue. The sequence is that of Peroxidase RIP1 from Medicago truncatula (Barrel medic).